The sequence spans 78 residues: Large ribosomal subunit protein bL28 (78 aa).

The segment at 1-20 (MSRVCQVTSKRPAVGNNRSH) is disordered.

It belongs to the bacterial ribosomal protein bL28 family.

The sequence is that of Large ribosomal subunit protein bL28 from Haemophilus ducreyi (strain 35000HP / ATCC 700724).